The sequence spans 380 residues: Tryptophan 2,3-dioxygenase (380 aa).

Substrate-binding positions include 57 to 61 and R128; that span reads FIITH. H313 lines the heme pocket. T328 serves as a coordination point for substrate.

This sequence belongs to the tryptophan 2,3-dioxygenase family. Homotetramer. Dimer of dimers. The cofactor is heme.

It catalyses the reaction L-tryptophan + O2 = N-formyl-L-kynurenine. The protein operates within amino-acid degradation; L-tryptophan degradation via kynurenine pathway; L-kynurenine from L-tryptophan: step 1/2. Its pathway is pigment biosynthesis; ommochrome biosynthesis. In terms of biological role, heme-dependent dioxygenase that catalyzes the oxidative cleavage of the L-tryptophan (L-Trp) pyrrole ring and converts L-tryptophan to N-formyl-L-kynurenine. Catalyzes the oxidative cleavage of the indole moiety. This Drosophila mojavensis (Fruit fly) protein is Tryptophan 2,3-dioxygenase.